Consider the following 462-residue polypeptide: Sensor histidine kinase RegB (462 aa).

The Cytoplasmic portion of the chain corresponds to 1-25 (MILGPDGILNRDTRGDWWRLRTLIL). The chain crosses the membrane as a helical span at residues 26–45 (LRWMAVAGQLAAIVVTDWYL). Residues 46–51 (GVRLPM) are Extracellular-facing. Residues 52 to 70 (GLCFMAVGASVIANVIATF) form a helical membrane-spanning segment. At 71–78 (VFPQNRRL) the chain is on the cytoplasmic side. Residues 79–96 (TEFQALMILLFDLTQLSF) traverse the membrane as a helical segment. The Extracellular portion of the chain corresponds to 97–103 (LLFLTGG). A helical transmembrane segment spans residues 104-123 (LTNPFALLILAPVTISGVAL). Residues 124 to 129 (DVRTTV) are Cytoplasmic-facing. Residues 130 to 149 (ILGAIAIGLLTFTAYFHLPL) form a helical membrane-spanning segment. At 150-164 (ILADGSSLSVPRMFE) the chain is on the extracellular side. Residues 165 to 182 (FGFWLAIVIGILFLGLYS) form a helical membrane-spanning segment. Topologically, residues 183–462 (RRVAIEIRSM…PLGENVLIQT (280 aa)) are cytoplasmic. Residues 218–445 (AAAHELGTPL…IVEVIWPVDR (228 aa)) enclose the Histidine kinase domain. Residue histidine 221 is modified to Phosphohistidine; by autocatalysis.

Its subcellular location is the cell inner membrane. It catalyses the reaction ATP + protein L-histidine = ADP + protein N-phospho-L-histidine.. Member of the two-component regulatory system RegB/RegA. Involved in the positive regulation of photosynthesis gene expression in response to anaerobiosis. Also involved in positive regulation of the cbbI and cbbII Calvin cycle CO2 fixation operons, as well as in regulation of expression of genes involved in alternative CO2 fixation pathways. Phosphorylates RegA/PrrA. In Cereibacter sphaeroides (Rhodobacter sphaeroides), this protein is Sensor histidine kinase RegB (regB).